We begin with the raw amino-acid sequence, 341 residues long: HTH-type transcriptional repressor CytR (341 aa).

One can recognise an HTH lacI-type domain in the interval 10–64 (ATMKDVALKAKVSTATVSRALMNPDKVSQATRNRVEKAAREVGYLPQPMGRNVKR). Residues 12-31 (MKDVALKAKVSTATVSRALM) constitute a DNA-binding region (H-T-H motif).

Functionally, this protein negatively controls the transcription initiation of genes such as deoCABD, udp, and cdd encoding catabolizing enzymes and nupC, nupG, and tsx encoding transporting and pore-forming proteins. Binds cytidine and adenosine as effectors. The chain is HTH-type transcriptional repressor CytR (cytR) from Escherichia coli (strain K12).